Reading from the N-terminus, the 418-residue chain is Serine/threonine transporter SstT (418 aa).

The next 8 membrane-spanning stretches (helical) occupy residues Ile-21–Ala-41, Phe-49–Ile-69, Ile-83–Phe-103, Ala-142–Leu-162, Phe-190–Ala-210, Leu-217–Val-237, Met-299–Ile-319, and Val-331–Ile-351.

It belongs to the dicarboxylate/amino acid:cation symporter (DAACS) (TC 2.A.23) family.

The protein resides in the cell inner membrane. The enzyme catalyses L-serine(in) + Na(+)(in) = L-serine(out) + Na(+)(out). It catalyses the reaction L-threonine(in) + Na(+)(in) = L-threonine(out) + Na(+)(out). Functionally, involved in the import of serine and threonine into the cell, with the concomitant import of sodium (symport system). This Yersinia pseudotuberculosis serotype O:1b (strain IP 31758) protein is Serine/threonine transporter SstT.